A 360-amino-acid chain; its full sequence is Venom serine protease Bi-VSP (360 aa).

Residues 1 to 26 (MTGSKMLFACLALIAFLHPLVHVASA) form the signal peptide. The propeptide occupies 27 to 113 (QECTTPNNKA…CGFSNVSHTR (87 aa)). The Clip domain occupies 28–79 (ECTTPNNKAGKCLGIRVCKPLLEMLQTQGHAAADFLRQSVCKYENNNPIVCC). 7 cysteine pairs are disulfide-bonded: C29–C78, C39–C68, C45–C79, C104–C230, C147–C163, C278–C296, and C307–C335. N108 carries N-linked (GlcNAc...) asparagine glycosylation. A Peptidase S1 domain is found at 114–360 (VVGGKPAVLG…LDDFILPAMQ (247 aa)). H162 serves as the catalytic Charge relay system. Ca(2+)-binding residues include D176, N178, R181, and D184. Catalysis depends on D210, which acts as the Charge relay system. Catalysis depends on S311, which acts as the Charge relay system.

Belongs to the peptidase S1 family. CLIP subfamily. Expressed by the venom gland.

It localises to the secreted. In terms of biological role, multifunctional venom serine protease. In insects, it acts as an arthropod prophenoloxidase-activating factor, thereby triggering the phenoloxidase cascade. When injected into larvae, it induces a lethal melanization response in target insects by modulating the innate immune response. In mammals, it converts fibrinogen into fibrin, activates prothrombin, and also degrades fibrin. In mammal, it may act in a cooperative manner with the serine protease inhibitor Bi-KTI (AC G3LH89) to promote the spread of bee venom under anti-bleeding conditions. The chain is Venom serine protease Bi-VSP from Bombus ignitus (Bumblebee).